The primary structure comprises 193 residues: Corrinoid adenosyltransferase (193 aa).

Residues 10–18, K28, 137–142, and N163 each bind ATP; these read TRTGDDGTT and RRAERS.

The protein belongs to the Cob(I)alamin adenosyltransferase family.

The protein localises to the cytoplasm. It carries out the reaction 2 cob(II)yrinate a,c diamide + reduced [electron-transfer flavoprotein] + 2 ATP = 2 adenosylcob(III)yrinate a,c-diamide + 2 triphosphate + oxidized [electron-transfer flavoprotein] + 3 H(+). The catalysed reaction is 2 cob(II)alamin + reduced [electron-transfer flavoprotein] + 2 ATP = 2 adenosylcob(III)alamin + 2 triphosphate + oxidized [electron-transfer flavoprotein] + 3 H(+). It functions in the pathway cofactor biosynthesis; adenosylcobalamin biosynthesis; adenosylcobalamin from cob(II)yrinate a,c-diamide: step 2/7. This is Corrinoid adenosyltransferase from Mycobacterium bovis (strain ATCC BAA-935 / AF2122/97).